The primary structure comprises 320 residues: SUMO-activating enzyme subunit 1B-1 (320 aa).

At M1 the chain carries N-acetylmethionine.

Belongs to the ubiquitin-activating E1 family. In terms of assembly, heterodimer of SAE1A or SAE1B and SAE2. The complex binds SUMO proteins via SAE2.

The protein resides in the nucleus. It functions in the pathway protein modification; protein sumoylation. Functionally, the dimeric enzyme acts as an E1 ligase for SUMO1 and SUMO2. It mediates ATP-dependent activation of SUMO proteins and formation of a thioester with a conserved cysteine residue on SAE2. Functionally redundant with its paralog SAE1A. The protein is SUMO-activating enzyme subunit 1B-1 (SAE1B-1) of Arabidopsis thaliana (Mouse-ear cress).